A 491-amino-acid chain; its full sequence is Probable Xaa-Pro aminopeptidase AFLA_084750 (491 aa).

4 residues coordinate Mn(2+): D271, D282, E419, and E458.

This sequence belongs to the peptidase M24B family. It depends on Mn(2+) as a cofactor.

The enzyme catalyses Release of any N-terminal amino acid, including proline, that is linked to proline, even from a dipeptide or tripeptide.. Catalyzes the removal of a penultimate prolyl residue from the N-termini of peptides. The chain is Probable Xaa-Pro aminopeptidase AFLA_084750 from Aspergillus flavus (strain ATCC 200026 / FGSC A1120 / IAM 13836 / NRRL 3357 / JCM 12722 / SRRC 167).